The sequence spans 205 residues: Casparian strip membrane protein 4 (205 aa).

Topologically, residues Met-1–Gly-58 are cytoplasmic. Residues Val-59–Ala-79 traverse the membrane as a helical segment. The Extracellular segment spans residues Lys-80–Ser-109. A helical membrane pass occupies residues Phe-110–Val-130. Residues Cys-131–Asp-148 lie on the Cytoplasmic side of the membrane. A helical membrane pass occupies residues Thr-149–Ala-169. Topologically, residues His-170–Phe-205 are extracellular. Asn-173 carries an N-linked (GlcNAc...) asparagine glycan.

It belongs to the Casparian strip membrane proteins (CASP) family. As to quaternary structure, homodimer and heterodimers.

The protein localises to the cell membrane. Regulates membrane-cell wall junctions and localized cell wall deposition. Required for establishment of the Casparian strip membrane domain (CSD) and the subsequent formation of Casparian strips, a cell wall modification of the root endodermis that determines an apoplastic barrier between the intraorganismal apoplasm and the extraorganismal apoplasm and prevents lateral diffusion. This Raphanus sativus (Radish) protein is Casparian strip membrane protein 4.